Consider the following 291-residue polypeptide: Aliphatic sulfonates import ATP-binding protein SsuB 2 (291 aa).

The ABC transporter domain maps to 26-247; sequence LRVRGIAKRY…APGLPALASI (222 aa). Residue 58 to 65 participates in ATP binding; sequence GRSGCGKS. The tract at residues 264–291 is disordered; that stretch reads PAAPKAQTRHGPPRGATAQDTSPLQRIL. The segment covering 281-291 has biased composition (polar residues); it reads AQDTSPLQRIL.

The protein belongs to the ABC transporter superfamily. Aliphatic sulfonates importer (TC 3.A.1.17.2) family. As to quaternary structure, the complex is composed of two ATP-binding proteins (SsuB), two transmembrane proteins (SsuC) and a solute-binding protein (SsuA).

The protein resides in the cell inner membrane. The catalysed reaction is ATP + H2O + aliphatic sulfonate-[sulfonate-binding protein]Side 1 = ADP + phosphate + aliphatic sulfonateSide 2 + [sulfonate-binding protein]Side 1.. Its function is as follows. Part of the ABC transporter complex SsuABC involved in aliphatic sulfonates import. Responsible for energy coupling to the transport system. The protein is Aliphatic sulfonates import ATP-binding protein SsuB 2 of Xanthomonas axonopodis pv. citri (strain 306).